The following is a 298-amino-acid chain: Esterase Rv0045c (298 aa).

S122 serves as the catalytic Nucleophile. Residues D146 and H277 contribute to the active site.

The protein belongs to the AB hydrolase superfamily. As to quaternary structure, monomer.

The enzyme catalyses a carboxylic ester + H2O = an alcohol + a carboxylate + H(+). It carries out the reaction a butanoate ester + H2O = an aliphatic alcohol + butanoate + H(+). It catalyses the reaction an acetyl ester + H2O = an aliphatic alcohol + acetate + H(+). The catalysed reaction is a hexanoate ester + H2O = an aliphatic alcohol + hexanoate + H(+). The enzyme catalyses a tetradecanoate ester + H2O = an aliphatic alcohol + tetradecanoate + H(+). With respect to regulation, hydrolysis of a fluorogenic ester substrate (MOAME) is allosterically inhibited by divalent transition metal cations (Cu(2+), Zn(2+), Ni(2+) and Co(2+)). Inhibition is largely due to a two order of magnitude drop in kcat, with relatively little change in KM. The thermal stability decreases with increasing concentrations of Ni(2+). In terms of biological role, esterase likely involved in ester/lipid metabolism. Shows strong substrate selectivity toward short, straight chain alkyl esters with the highest activity toward four atom chains. The physiological substrate is unknown. Is able to hydrolyze ester bonds within a wide range of p-nitrophenyl derivatives (C2-C14) in vitro. The protein is Esterase Rv0045c of Mycobacterium tuberculosis (strain ATCC 25618 / H37Rv).